We begin with the raw amino-acid sequence, 650 residues long: A-kinase anchor protein 10, mitochondrial (650 aa).

The N-terminal 16 residues, 1-16, are a transit peptide targeting the mitochondrion; that stretch reads RALRPDPGPAMSFFRR. Disordered stretches follow at residues 1–45 and 168–192; these read RALR…QKST and SSLAEPVSPTQKHETAAAPVTESLD. Serine 40 is modified (phosphoserine). 2 consecutive RGS domains span residues 113 to 356 and 366 to 493; these read TLEQ…CKYQ and YLAD…YKYL. A Phosphoserine modification is found at serine 268. The segment at 512–535 is disordered; the sequence is LAAQGSGGPPDDPLPGASDPSASQ. The span at 525–535 shows a compositional bias: low complexity; that stretch reads LPGASDPSASQ. The PKA-RII subunit binding stretch occupies residues 622-635; sequence LAWKIAKMIVSDVM.

It localises to the mitochondrion. The protein localises to the membrane. The protein resides in the cytoplasm. In terms of biological role, differentially targeted protein that binds to type I and II regulatory subunits of protein kinase A and anchors them to the mitochondria or the plasma membrane. Although the physiological relevance between PKA and AKAPS with mitochondria is not fully understood, one idea is that BAD, a proapoptotic member, is phosphorylated and inactivated by mitochondria-anchored PKA. It cannot be excluded too that it may facilitate PKA as well as G protein signal transduction, by acting as an adapter for assembling multiprotein complexes. With its RGS domain, it could lead to the interaction to G-alpha proteins, providing a link between the signaling machinery and the downstream kinase. This is A-kinase anchor protein 10, mitochondrial (AKAP10) from Sus scrofa (Pig).